Reading from the N-terminus, the 99-residue chain is Protein Tat (99 aa).

The tract at residues 1–24 (MDPVDPKLEPWNHPGSQPQTACNN) is interaction with human CREBBP. Residues 1-48 (MDPVDPKLEPWNHPGSQPQTACNNCYCKKCCYHCQMCFLKKGLGISYG) are transactivation. Zn(2+)-binding residues include C22, C25, and C27. Residues 22-37 (CNNCYCKKCCYHCQMC) form a cysteine-rich region. The residue at position 28 (K28) is an N6-acetyllysine; by host PCAF. 4 residues coordinate Zn(2+): C30, H33, C34, and C37. The core stretch occupies residues 38-48 (FLKKGLGISYG). A compositionally biased stretch (basic residues) spans 48–58 (GRKKRSQRHRT). Positions 48 to 99 (GRKKRSQRHRTPASLQDHQNSISKQPLSRTHGDPTGPKEQKKEVASKTETDP) are disordered. The Nuclear localization signal, RNA-binding (TAR), and protein transduction motif lies at 49–57 (RKKRSQRHR). Residues 49–86 (RKKRSQRHRTPASLQDHQNSISKQPLSRTHGDPTGPKE) are interaction with the host capping enzyme RNGTT. K50 and K51 each carry N6-acetyllysine; by host EP300 and GCN5L2. R52 is modified (asymmetric dimethylarginine; by host PRMT6). Positions 60 to 75 (ASLQDHQNSISKQPLS) are enriched in polar residues. K71 participates in a covalent cross-link: Glycyl lysine isopeptide (Lys-Gly) (interchain with G-Cter in ubiquitin). Over residues 77–99 (THGDPTGPKEQKKEVASKTETDP) the composition is skewed to basic and acidic residues.

This sequence belongs to the lentiviruses Tat family. In terms of assembly, interacts with host CCNT1. Associates with the P-TEFb complex composed at least of Tat, P-TEFb (CDK9 and CCNT1), TAR RNA, RNA Pol II. Recruits the HATs CREBBP, TAF1/TFIID, EP300, PCAF and GCN5L2. Interacts with host KAT5/Tip60; this interaction targets the latter to degradation. Interacts with the host deacetylase SIRT1. Interacts with host capping enzyme RNGTT; this interaction stimulates RNGTT. Binds to host KDR, and to the host integrins ITGAV/ITGB3 and ITGA5/ITGB1. Interacts with host KPNB1/importin beta-1 without previous binding to KPNA1/importin alpha-1. Interacts with EIF2AK2. Interacts with host nucleosome assembly protein NAP1L1; this interaction may be required for the transport of Tat within the nucleus, since the two proteins interact at the nuclear rim. Interacts with host C1QBP/SF2P32; this interaction involves lysine-acetylated Tat. Interacts with the host chemokine receptors CCR2, CCR3 and CXCR4. Interacts with host DPP4/CD26; this interaction may trigger an anti-proliferative effect. Interacts with host LDLR. Interacts with the host extracellular matrix metalloproteinase MMP1. Interacts with host PRMT6; this interaction mediates Tat's methylation. Interacts with, and is ubiquitinated by MDM2/Hdm2. Interacts with host PSMC3 and HTATIP2. Interacts with STAB1; this interaction may overcome SATB1-mediated repression of IL2 and IL2RA (interleukin) in T cells by binding to the same domain than HDAC1. Interacts (when acetylated) with human CDK13, thereby increasing HIV-1 mRNA splicing and promoting the production of the doubly spliced HIV-1 protein Nef. Interacts with host TBP; this interaction modulates the activity of transcriptional pre-initiation complex. Interacts with host RELA. Interacts with host PLSCR1; this interaction negatively regulates Tat transactivation activity by altering its subcellular distribution. In terms of processing, asymmetrical arginine methylation by host PRMT6 seems to diminish the transactivation capacity of Tat and affects the interaction with host CCNT1. Post-translationally, acetylation by EP300, CREBBP, GCN5L2/GCN5 and PCAF regulates the transactivation activity of Tat. EP300-mediated acetylation of Lys-50 promotes dissociation of Tat from the TAR RNA through the competitive binding to PCAF's bromodomain. In addition, the non-acetylated Tat's N-terminus can also interact with PCAF. PCAF-mediated acetylation of Lys-28 enhances Tat's binding to CCNT1. Lys-50 is deacetylated by SIRT1. Polyubiquitination by host MDM2 does not target Tat to degradation, but activates its transactivation function and fosters interaction with CCNT1 and TAR RNA. In terms of processing, phosphorylated by EIF2AK2 on serine and threonine residues adjacent to the basic region important for TAR RNA binding and function. Phosphorylation of Tat by EIF2AK2 is dependent on the prior activation of EIF2AK2 by dsRNA.

It localises to the host nucleus. The protein localises to the host nucleolus. Its subcellular location is the host cytoplasm. It is found in the secreted. Transcriptional activator that increases RNA Pol II processivity, thereby increasing the level of full-length viral transcripts. Recognizes a hairpin structure at the 5'-LTR of the nascent viral mRNAs referred to as the transactivation responsive RNA element (TAR) and recruits the cyclin T1-CDK9 complex (P-TEFb complex) that will in turn hyperphosphorylate the RNA polymerase II to allow efficient elongation. The CDK9 component of P-TEFb and other Tat-activated kinases hyperphosphorylate the C-terminus of RNA Pol II that becomes stabilized and much more processive. Other factors such as HTATSF1/Tat-SF1, SUPT5H/SPT5, and HTATIP2 are also important for Tat's function. Besides its effect on RNA Pol II processivity, Tat induces chromatin remodeling of proviral genes by recruiting the histone acetyltransferases (HATs) CREBBP, EP300 and PCAF to the chromatin. This also contributes to the increase in proviral transcription rate, especially when the provirus integrates in transcriptionally silent region of the host genome. To ensure maximal activation of the LTR, Tat mediates nuclear translocation of NF-kappa-B by interacting with host RELA. Through its interaction with host TBP, Tat may also modulate transcription initiation. Tat can reactivate a latently infected cell by penetrating in it and transactivating its LTR promoter. In the cytoplasm, Tat is thought to act as a translational activator of HIV-1 mRNAs. Its function is as follows. Extracellular circulating Tat can be endocytosed by surrounding uninfected cells via the binding to several surface receptors such as CD26, CXCR4, heparan sulfate proteoglycans (HSPG) or LDLR. Neurons are rarely infected, but they internalize Tat via their LDLR. Through its interaction with nuclear HATs, Tat is potentially able to control the acetylation-dependent cellular gene expression. Modulates the expression of many cellular genes involved in cell survival, proliferation or in coding for cytokines or cytokine receptors. Tat plays a role in T-cell and neurons apoptosis. Tat induced neurotoxicity and apoptosis probably contribute to neuroAIDS. Circulating Tat also acts as a chemokine-like and/or growth factor-like molecule that binds to specific receptors on the surface of the cells, affecting many cellular pathways. In the vascular system, Tat binds to ITGAV/ITGB3 and ITGA5/ITGB1 integrins dimers at the surface of endothelial cells and competes with bFGF for heparin-binding sites, leading to an excess of soluble bFGF. This chain is Protein Tat, found in Homo sapiens (Human).